The sequence spans 589 residues: Guanylate-binding protein 2 (589 aa).

The GTPase domain (Globular) stretch occupies residues 1–309; the sequence is MASEIHMSEP…GAISNGSLPC (309 aa). Residues 35-276 enclose the GB1/RHD3-type G domain; it reads TQPVVVVAIV…FTSYILSYSS (242 aa). Residues 45 to 52, 181 to 182, and leucine 245 contribute to the GTP site; these read GLYRTGKS and RD. Cysteine 586 is modified (cysteine methyl ester). A lipid anchor (S-geranylgeranyl cysteine) is attached at cysteine 586. Residues 587 to 589 constitute a propeptide, removed in mature form; that stretch reads TIL.

Belongs to the TRAFAC class dynamin-like GTPase superfamily. GB1/RHD3 GTPase family. GB1 subfamily. As to quaternary structure, homodimer; homodimerization occurs upon GTP-binding and is required for the association with membranous structures. Heterodimer with other family members, including GBP1, GBP3, GBP4 and GBP5. Isoprenylation is required for proper subcellular location.

The protein resides in the cytoplasmic vesicle membrane. Its subcellular location is the golgi apparatus membrane. It is found in the cytoplasm. The protein localises to the perinuclear region. It carries out the reaction GTP + H2O = GDP + phosphate + H(+). Interferon (IFN)-inducible GTPase that plays important roles in innate immunity against a diverse range of bacterial, viral and protozoan pathogens. Hydrolyzes GTP to GMP in 2 consecutive cleavage reactions, but the major reaction product is GDP. Following infection, recruited to the pathogen-containing vacuoles or vacuole-escaped bacteria and acts as a positive regulator of inflammasome assembly by promoting the release of inflammasome ligands from bacteria. Acts by promoting lysis of pathogen-containing vacuoles, releasing pathogens into the cytosol. Following pathogen release in the cytosol, promotes recruitment of proteins that mediate bacterial cytolysis, such as Gm12250/Irgb10: this liberates ligands that are detected by inflammasomes, such as lipopolysaccharide (LPS) that activates the non-canonical CASP4/CASP11 inflammasome or double-stranded DNA (dsDNA) that activates the AIM2 inflammasome. Confers protection to the protozoan pathogen Toxoplasma gondii. Independently of its GTPase activity, acts as an inhibitor of various viruses infectivity by inhibiting FURIN-mediated maturation of viral envelope proteins. The chain is Guanylate-binding protein 2 from Mus musculus (Mouse).